The primary structure comprises 132 residues: uncharacterized protein (132 aa).

Helical transmembrane passes span 18–38 (MLFIFMPFAITSFFAFLFIGI), 50–70 (IIYFFIFAFGFVLPDLPGVFI), and 71–91 (VVPLWAVTIIHGFKVRPLYLI).

It is found in the cell membrane. This is an uncharacterized protein from Bacillus subtilis (strain 168).